The chain runs to 339 residues: Protein-lysine N-methyltransferase EFM3 (339 aa).

S-adenosyl-L-methionine contacts are provided by residues Trp137 and 174 to 176 (GAG). Thr177 bears the Phosphothreonine mark. Positions 199, 233, and 248 each coordinate S-adenosyl-L-methionine.

This sequence belongs to the class I-like SAM-binding methyltransferase superfamily. EEF2KMT family.

It localises to the cytoplasm. S-adenosyl-L-methionine-dependent protein-lysine N-methyltransferase that mono-, di- and trimethylates elongation factor 2 (EFT1/EFT2) at 'Lys-509'. The protein is Protein-lysine N-methyltransferase EFM3 of Saccharomyces cerevisiae (strain ATCC 204508 / S288c) (Baker's yeast).